Reading from the N-terminus, the 715-residue chain is Fatty acid oxidation complex subunit alpha (715 aa).

An enoyl-CoA hydratase region spans residues 1–190; sequence MTTTSAFMLN…KAGLVDDVVP (190 aa). The 3-hydroxyacyl-CoA dehydrogenase stretch occupies residues 306 to 714; sequence GPLNSVGILG…FWTNGETDQG (409 aa).

The protein in the N-terminal section; belongs to the enoyl-CoA hydratase/isomerase family. In the central section; belongs to the 3-hydroxyacyl-CoA dehydrogenase family. In terms of assembly, heterotetramer of two alpha chains (FadJ) and two beta chains (FadI).

It is found in the cytoplasm. It catalyses the reaction a (3S)-3-hydroxyacyl-CoA = a (2E)-enoyl-CoA + H2O. The enzyme catalyses a 4-saturated-(3S)-3-hydroxyacyl-CoA = a (3E)-enoyl-CoA + H2O. It carries out the reaction a (3S)-3-hydroxyacyl-CoA + NAD(+) = a 3-oxoacyl-CoA + NADH + H(+). The catalysed reaction is (3S)-3-hydroxybutanoyl-CoA = (3R)-3-hydroxybutanoyl-CoA. It functions in the pathway lipid metabolism; fatty acid beta-oxidation. Catalyzes the formation of a hydroxyacyl-CoA by addition of water on enoyl-CoA. Also exhibits 3-hydroxyacyl-CoA epimerase and 3-hydroxyacyl-CoA dehydrogenase activities. This Salmonella choleraesuis (strain SC-B67) protein is Fatty acid oxidation complex subunit alpha.